Here is a 200-residue protein sequence, read N- to C-terminus: Holliday junction branch migration complex subunit RuvA (200 aa).

The segment at 1–64 is domain I; the sequence is MFAYFKGSLV…EDALQLYGFF (64 aa). Residues 65–143 are domain II; the sequence is KEEERQLFRL…KLPLVTPAAG (79 aa). The interval 143–147 is flexible linker; the sequence is GKAAM. The tract at residues 148–200 is domain III; sequence PSHHVKDDAVHALVTLGFSRLLAQKAVSALLEEKPEQSVEEVIKYALATIHNS.

This sequence belongs to the RuvA family. As to quaternary structure, homotetramer. Forms an RuvA(8)-RuvB(12)-Holliday junction (HJ) complex. HJ DNA is sandwiched between 2 RuvA tetramers; dsDNA enters through RuvA and exits via RuvB. An RuvB hexamer assembles on each DNA strand where it exits the tetramer. Each RuvB hexamer is contacted by two RuvA subunits (via domain III) on 2 adjacent RuvB subunits; this complex drives branch migration. In the full resolvosome a probable DNA-RuvA(4)-RuvB(12)-RuvC(2) complex forms which resolves the HJ.

The protein resides in the cytoplasm. Its function is as follows. The RuvA-RuvB-RuvC complex processes Holliday junction (HJ) DNA during genetic recombination and DNA repair, while the RuvA-RuvB complex plays an important role in the rescue of blocked DNA replication forks via replication fork reversal (RFR). RuvA specifically binds to HJ cruciform DNA, conferring on it an open structure. The RuvB hexamer acts as an ATP-dependent pump, pulling dsDNA into and through the RuvAB complex. HJ branch migration allows RuvC to scan DNA until it finds its consensus sequence, where it cleaves and resolves the cruciform DNA. The protein is Holliday junction branch migration complex subunit RuvA of Chlorobium phaeobacteroides (strain DSM 266 / SMG 266 / 2430).